We begin with the raw amino-acid sequence, 357 residues long: DNA replication and repair protein RecF (357 aa).

ATP is bound at residue 30 to 37 (GANGSGKT).

This sequence belongs to the RecF family.

Its subcellular location is the cytoplasm. Functionally, the RecF protein is involved in DNA metabolism; it is required for DNA replication and normal SOS inducibility. RecF binds preferentially to single-stranded, linear DNA. It also seems to bind ATP. In Escherichia coli O139:H28 (strain E24377A / ETEC), this protein is DNA replication and repair protein RecF.